The sequence spans 72 residues: UPF0346 protein EF_1680 (72 aa).

It belongs to the UPF0346 family.

The chain is UPF0346 protein EF_1680 from Enterococcus faecalis (strain ATCC 700802 / V583).